The primary structure comprises 515 residues: C-glycoside 3-oxidase (515 aa).

Glu-41 serves as a coordination point for FAD. A compositionally biased stretch (basic and acidic residues) spans 62 to 82; the sequence is ERAHAQRRSEGPHAREDDDRV. The disordered stretch occupies residues 62–90; the sequence is ERAHAQRRSEGPHAREDDDRVGGIVKSAQ. FAD contacts are provided by Ser-118, Asn-120, Met-124, Thr-129, Ala-131, and Val-237. Residue His-444 is the Proton acceptor of the active site. 2 residues coordinate FAD: Asn-478 and Thr-490.

This sequence belongs to the GMC oxidoreductase family. In terms of assembly, monomer. Requires FAD as cofactor.

The enzyme catalyses isoorientin + O2 = 3''-dehydroisoorientin + H2O2. It carries out the reaction mangiferin + O2 = 3'-dehydromangiferin + H2O2. Its function is as follows. FAD-dependent C-glycoside-metabolizing enzyme that participates in the degradation of certain C-glycosides by catalyzing the oxidation of the hydroxyl group at the C3 position of the sugar moiety. Shows oxidase activity toward C-glycosides such as isoorientin and mangiferin but cannot use carminic acid, puerarin, orientin or aloesin. Shows weak activity (100 to 1000-fold lower) with O-glycosides. Probably plays a crucial role in the metabolism of C-glycosides in nature. The sequence is that of C-glycoside 3-oxidase from Microbacterium trichothecenolyticum (Aureobacterium trichothecenolyticum).